The chain runs to 332 residues: Fructose-1,6-bisphosphatase class 1 (332 aa).

Mg(2+) contacts are provided by E89, D110, L112, and D113. Substrate is bound by residues 113 to 116 (DGSS), N206, Y239, 257 to 259 (YLY), and K269. Residue E275 participates in Mg(2+) binding.

This sequence belongs to the FBPase class 1 family. In terms of assembly, homotetramer. Requires Mg(2+) as cofactor.

It localises to the cytoplasm. The enzyme catalyses beta-D-fructose 1,6-bisphosphate + H2O = beta-D-fructose 6-phosphate + phosphate. The protein operates within carbohydrate biosynthesis; gluconeogenesis. The polypeptide is Fructose-1,6-bisphosphatase class 1 (Escherichia coli (strain ATCC 8739 / DSM 1576 / NBRC 3972 / NCIMB 8545 / WDCM 00012 / Crooks)).